The following is a 161-amino-acid chain: Cell cycle link protein (161 aa).

The segment at 9 to 21 (MPDDVKREIKEIY) is binding to host SKP1 protein. The LXCXE motif, interaction with host RBR signature appears at 111 to 115 (LYCDE).

Interacts with host SKP1. Interacts (via LXCXE domain) with host retinoblastoma-related protein 2 (RBR2). Interacts (via LXCXE domain) with human RB1. Interacts (via LXCXE domain) with retinoblastoma-related proteins (RBR).

In terms of biological role, interacts with and disrupts the function of host retinoblastoma-related proteins RBR, which are key regulators of the cell cycle. Induces transcriptional activation of E2F-regulated S-phase and G2/M-phase-specific genes. Inactivation of the ability of RBR to arrest the cell cycle leads to the stimulation of viral DNA replication. Acts as a suppressor of RNA-mediated gene silencing, also known as post-transcriptional gene silencing (PTGS), a mechanism of plant viral defense that limits the accumulation of viral RNAs. The protein is Cell cycle link protein (DNA-C) of Musa (BBTV).